The primary structure comprises 457 residues: Succinate-semialdehyde dehydrogenase [NADP(+)] (457 aa).

NADP(+) contacts are provided by residues 133 to 134 (WN), 157 to 160 (KHAS), and 209 to 210 (GS). The Proton acceptor role is filled by Glu-231. Residue Leu-232 participates in NADP(+) binding. Cys-265 acts as the Nucleophile in catalysis. Residue Glu-362 participates in NADP(+) binding.

Belongs to the aldehyde dehydrogenase family.

It catalyses the reaction succinate semialdehyde + NADP(+) + H2O = succinate + NADPH + 2 H(+). Functionally, catalyzes the NADP(+)-dependent oxidation of succinate semialdehyde to succinate. It is believed to be the main source of succinate semialdehyde dehydrogenase activity in Mycobacterium. The polypeptide is Succinate-semialdehyde dehydrogenase [NADP(+)] (gabD1) (Mycobacterium leprae (strain TN)).